Consider the following 283-residue polypeptide: tRNA-cytidine(32) 2-sulfurtransferase (283 aa).

Positions 32–37 (SGGKDS) match the PP-loop motif motif. [4Fe-4S] cluster is bound by residues C107, C110, and C198.

Belongs to the TtcA family. As to quaternary structure, homodimer. It depends on Mg(2+) as a cofactor. Requires [4Fe-4S] cluster as cofactor.

The protein localises to the cytoplasm. The catalysed reaction is cytidine(32) in tRNA + S-sulfanyl-L-cysteinyl-[cysteine desulfurase] + AH2 + ATP = 2-thiocytidine(32) in tRNA + L-cysteinyl-[cysteine desulfurase] + A + AMP + diphosphate + H(+). Its pathway is tRNA modification. Catalyzes the ATP-dependent 2-thiolation of cytidine in position 32 of tRNA, to form 2-thiocytidine (s(2)C32). The sulfur atoms are provided by the cysteine/cysteine desulfurase (IscS) system. The chain is tRNA-cytidine(32) 2-sulfurtransferase from Sorangium cellulosum (strain So ce56) (Polyangium cellulosum (strain So ce56)).